Consider the following 471-residue polypeptide: O-acetyltransferase astG (471 aa).

It belongs to the fumigaclavine B O-acetyltransferase family. As to quaternary structure, monomer.

It carries out the reaction dideacetyl astellolide A + acetyl-CoA = 14-deacetyl astellolide A + CoA. The catalysed reaction is dideacetyl astellolide B + acetyl-CoA = 14-deacetyl astellolide B + CoA. The protein operates within secondary metabolite biosynthesis; terpenoid biosynthesis. O-acetyltransferase; part of the gene cluster that mediates the biosynthesis of astellolides, drimane-type sesquiterpene esters that show antimicrobial, anti-inflammatory, and anti-tumor activities. The first step in astellolide biosynthesis is performed by the sesquiterpene cyclase astC that catalyzes the formation of drimanyl pyrophosphate from farnesyl pyrophosphate. Drimanyl pyrophosphate is then dephosphorylated by the sesquiterpene phosphatase astI to produce drimanyl monophosphate which is further dephosphorylated to drim-8-ene-11-ol by atsK. Drim-8-ene-11-ol is converted to confertifolin, probably by the cytochrome P450 monooxygenase astD and/or the dehydrogenase astE. The cytochrome P450 monooxygenases astB, astF and astJ then hydroxylate confertifolin at C6, C14, or C15 to form trihydroxy confertifolin. The nonribosomal peptide synthetase astA catalyzes ester bond formation between trihydroxy contifolin and benzoic acid (BA) or 4-hydroxy benzoic acid (4HBA), leading to the formation of dideacetyl astellolides A and B, respectively. Finally, the O-acetyltransferase astG converts dideacetyl astellolides A and B into deacetyl astellolides A and B. The protein is O-acetyltransferase astG of Aspergillus oryzae (strain ATCC 42149 / RIB 40) (Yellow koji mold).